The following is a 682-amino-acid chain: Potassium-transporting ATPase ATP-binding subunit (682 aa).

The next 4 membrane-spanning stretches (helical) occupy residues 34-54 (PVMF…IAMA), 62-82 (ALFS…ANFA), 219-239 (IALT…TATL), and 254-274 (VLVA…LSAI). Residue Asp307 is the 4-aspartylphosphate intermediate of the active site. ATP-binding positions include Asp344, Glu348, 377–384 (FTAQSRMS), and Lys395. Positions 518 and 522 each coordinate Mg(2+). The next 3 helical transmembrane spans lie at 588–608 (FAII…LNIM), 616–636 (AILS…PLAL), and 656–676 (IYGL…DLLL).

Belongs to the cation transport ATPase (P-type) (TC 3.A.3) family. Type IA subfamily. In terms of assembly, the system is composed of three essential subunits: KdpA, KdpB and KdpC.

It is found in the cell inner membrane. It carries out the reaction K(+)(out) + ATP + H2O = K(+)(in) + ADP + phosphate + H(+). In terms of biological role, part of the high-affinity ATP-driven potassium transport (or Kdp) system, which catalyzes the hydrolysis of ATP coupled with the electrogenic transport of potassium into the cytoplasm. This subunit is responsible for energy coupling to the transport system and for the release of the potassium ions to the cytoplasm. The chain is Potassium-transporting ATPase ATP-binding subunit from Escherichia coli O157:H7 (strain EC4115 / EHEC).